Consider the following 191-residue polypeptide: Large ribosomal subunit protein bL9 (191 aa).

Residues 151–191 (AERQAKGESLTSADAIYGVDEDALKPEDFFNPEAEIESEEE) are disordered.

It belongs to the bacterial ribosomal protein bL9 family.

Functionally, binds to the 23S rRNA. The polypeptide is Large ribosomal subunit protein bL9 (Sinorhizobium medicae (strain WSM419) (Ensifer medicae)).